The following is an 85-amino-acid chain: Sec-independent protein translocase protein TatA (85 aa).

A helical membrane pass occupies residues 1–21 (MGGISIWQLLIIALIVVLLFG). The tract at residues 43–85 (MSSDEDKKALEDAEAAKSVQTAQTAQPTQQATEKKPESNKEQA) is disordered. The segment covering 46–57 (DEDKKALEDAEA) has biased composition (basic and acidic residues). Residues 58–73 (AKSVQTAQTAQPTQQA) show a composition bias toward low complexity. The segment covering 74 to 85 (TEKKPESNKEQA) has biased composition (basic and acidic residues).

Belongs to the TatA/E family. In terms of assembly, the Tat system comprises two distinct complexes: a TatABC complex, containing multiple copies of TatA, TatB and TatC subunits, and a separate TatA complex, containing only TatA subunits. Substrates initially bind to the TatABC complex, which probably triggers association of the separate TatA complex to form the active translocon.

It localises to the cell inner membrane. Its function is as follows. Part of the twin-arginine translocation (Tat) system that transports large folded proteins containing a characteristic twin-arginine motif in their signal peptide across membranes. TatA could form the protein-conducting channel of the Tat system. This is Sec-independent protein translocase protein TatA from Shewanella sp. (strain ANA-3).